The primary structure comprises 232 residues: 7-cyano-7-deazaguanine synthase (232 aa).

Residue 8–18 (FSGGQDSTTCL) coordinates ATP. Residues cysteine 187, cysteine 196, cysteine 199, and cysteine 202 each contribute to the Zn(2+) site.

Belongs to the QueC family. Requires Zn(2+) as cofactor.

It carries out the reaction 7-carboxy-7-deazaguanine + NH4(+) + ATP = 7-cyano-7-deazaguanine + ADP + phosphate + H2O + H(+). It participates in purine metabolism; 7-cyano-7-deazaguanine biosynthesis. In terms of biological role, catalyzes the ATP-dependent conversion of 7-carboxy-7-deazaguanine (CDG) to 7-cyano-7-deazaguanine (preQ(0)). The polypeptide is 7-cyano-7-deazaguanine synthase (Vibrio vulnificus (strain YJ016)).